Reading from the N-terminus, the 856-residue chain is Structure-specific endonuclease subunit SLX4 (856 aa).

Residues methionine 1 to serine 19 show a composition bias toward polar residues. Disordered stretches follow at residues methionine 1–valine 24, valine 38–isoleucine 65, valine 88–alanine 121, lysine 139–leucine 202, glycine 296–glutamine 326, lysine 362–proline 392, serine 621–aspartate 640, arginine 668–proline 689, and aspartate 715–aspartate 742. The segment covering serine 51–serine 60 has biased composition (low complexity). The span at lysine 139–arginine 152 shows a compositional bias: basic residues. Residues glycine 296 to aspartate 309 show a composition bias toward polar residues. Polar residues predominate over residues serine 673–asparagine 686.

The protein belongs to the SLX4 family. As to quaternary structure, forms a heterodimer with SLX1. Phosphorylated in response to DNA damage.

The protein localises to the nucleus. Regulatory subunit of the SLX1-SLX4 structure-specific endonuclease that resolves DNA secondary structures generated during DNA repair and recombination. Has endonuclease activity towards branched DNA substrates, introducing single-strand cuts in duplex DNA close to junctions with ss-DNA. This chain is Structure-specific endonuclease subunit SLX4, found in Blastomyces gilchristii (strain SLH14081) (Blastomyces dermatitidis).